Reading from the N-terminus, the 462-residue chain is MSHKLLAFPRLNYISNFNFFYKNTTKNLILDQNFIGNLYLTSTPTCRKLVTIPSNRNIMTTSSNLKESDSGSILENVATKVLNCQEPEAKSSQKIDTDKVSSNKVESTHIPFKVVPKELNKSSSATATSSSKTKTNLRSIIQPYVKLTKPNLTILVTLSSICSYAISPYTVSLPELLFLTMGTALCSGAANAINMGREPEFDKKMPRTVGRPVVRGLISPKQAYQFAGITGSLGCTMLFLGVNPTVSFLGFLNIVLYSWIYTSLKRKSIINTWVGAIVGAIPPLMGWAASSPLDHPGAWCLAGLLYAWQFPHFNALSHNIADQYKGAGYVMTAAENPKLNARVALRYSLLMFPLCFGLSYFGITDWVFQFDSAIANSWLTYLAYKFWMQIKQNYTGQKPTANGIAMANIHAKKLFWGSVWHLPAVLILAMLHKKGQWDRLLIYSGLKSHDHKSQSSNNIGLI.

7 helical membrane passes run 152-172 (LTIL…YTVS), 173-193 (LPEL…ANAI), 237-257 (MLFL…IVLY), 269-289 (IINT…GWAA), 296-316 (PGAW…FNAL), 348-368 (SLLM…DWVF), and 411-431 (AKKL…LAML).

Belongs to the UbiA prenyltransferase family.

It localises to the mitochondrion membrane. Converts protoheme IX and farnesyl diphosphate to heme O. In Debaryomyces hansenii (strain ATCC 36239 / CBS 767 / BCRC 21394 / JCM 1990 / NBRC 0083 / IGC 2968) (Yeast), this protein is Protoheme IX farnesyltransferase, mitochondrial (COX10).